The following is a 266-amino-acid chain: Killer cell lectin-like receptor 5 (266 aa).

Topologically, residues 1 to 44 (MSEPEVTYSTVRLHKSSGLQRLVSHEEIQGPGEAGYRKCSVPWQ) are cytoplasmic. A helical; Signal-anchor for type II membrane protein membrane pass occupies residues 45–66 (LTVRSLGIFCFLLLVTVAVLAV). The Extracellular segment spans residues 67–266 (KIFQYSQHKQ…CGKKLDHFPG (200 aa)). 2 N-linked (GlcNAc...) asparagine glycosylation sites follow: asparagine 87 and asparagine 104. Positions 143–261 (GVKHWFCYGT…SYFCICGKKL (119 aa)) constitute a C-type lectin domain. 4 cysteine pairs are disulfide-bonded: cysteine 149–cysteine 154, cysteine 167–cysteine 255, cysteine 171–cysteine 257, and cysteine 236–cysteine 249. Asparagine 250 carries an N-linked (GlcNAc...) asparagine glycan.

In terms of assembly, homodimer; disulfide-linked. Mostly expressed in NK cells, but also observed on NK T and memory T-cells.

It localises to the membrane. Functionally, receptor on natural killer (NK) cells for class I MHC. The polypeptide is Killer cell lectin-like receptor 5 (Klra5) (Mus musculus (Mouse)).